Consider the following 389-residue polypeptide: MQIFWFLPTHGDSRYLGTSEGARPIDLAYLQQIAGAADQLGYEGVLIPTGRSCEDPWVIASSLIGATKNLKFLVAVRPGLHQPSLAARMAATFDRLSGGRLLVNLVTGGDQSELEGDGVYLDHAQRYEQSAEFIRIWREILARSHSGQAFDYEGRHLSVKGAKLLYPPVQEPYPPVWFGGSSAAAHELAAEQVDAYLTWGEPPAEVARKIADVRNRAARKGRTVEFGIRLHVIVRETEDAAWKAAEELISRVDDETVIRAQAAFARMDSEGQRRMAALHAGGARRSRAELEISPNLWAGVGLVRGGAGTALVGDPKTVAARIEEYAALGLDKFILSGYPHLEEAYRFAELVFPLLSRKAQSRLAGGSLSGPFGEVVANLDAPSRLASQS.

It belongs to the SsuD family.

It carries out the reaction an alkanesulfonate + FMNH2 + O2 = an aldehyde + FMN + sulfite + H2O + 2 H(+). Its function is as follows. Catalyzes the desulfonation of aliphatic sulfonates. This Variovorax paradoxus (strain S110) protein is Alkanesulfonate monooxygenase.